The primary structure comprises 102 residues: NADH-quinone oxidoreductase subunit K (102 aa).

Helical transmembrane passes span 3-23 (IGLTHYLTVGAILFGLGAFGI), 31-51 (IVLLMAIELMLLAVNINLVAF), and 66-86 (FILTVAAAEAAIGLAILVVYF).

It belongs to the complex I subunit 4L family. In terms of assembly, NDH-1 is composed of 14 different subunits. Subunits NuoA, H, J, K, L, M, N constitute the membrane sector of the complex.

Its subcellular location is the cell inner membrane. It catalyses the reaction a quinone + NADH + 5 H(+)(in) = a quinol + NAD(+) + 4 H(+)(out). In terms of biological role, NDH-1 shuttles electrons from NADH, via FMN and iron-sulfur (Fe-S) centers, to quinones in the respiratory chain. The immediate electron acceptor for the enzyme in this species is believed to be ubiquinone. Couples the redox reaction to proton translocation (for every two electrons transferred, four hydrogen ions are translocated across the cytoplasmic membrane), and thus conserves the redox energy in a proton gradient. The sequence is that of NADH-quinone oxidoreductase subunit K from Rhodospirillum centenum (strain ATCC 51521 / SW).